A 152-amino-acid polypeptide reads, in one-letter code: Aspartate 1-decarboxylase (152 aa).

S24 (schiff-base intermediate with substrate; via pyruvic acid) is an active-site residue. Position 24 is a pyruvic acid (Ser) (S24). Position 56 (T56) interacts with substrate. The active-site Proton donor is Y57. 72–74 (GAA) lines the substrate pocket.

It belongs to the PanD family. Heterooctamer of four alpha and four beta subunits. Requires pyruvate as cofactor. In terms of processing, is synthesized initially as an inactive proenzyme, which is activated by self-cleavage at a specific serine bond to produce a beta-subunit with a hydroxyl group at its C-terminus and an alpha-subunit with a pyruvoyl group at its N-terminus.

It localises to the cytoplasm. The catalysed reaction is L-aspartate + H(+) = beta-alanine + CO2. The protein operates within cofactor biosynthesis; (R)-pantothenate biosynthesis; beta-alanine from L-aspartate: step 1/1. Its function is as follows. Catalyzes the pyruvoyl-dependent decarboxylation of aspartate to produce beta-alanine. In Methylobacterium nodulans (strain LMG 21967 / CNCM I-2342 / ORS 2060), this protein is Aspartate 1-decarboxylase.